Reading from the N-terminus, the 1634-residue chain is Phosphatidylinositol 4-phosphate 3-kinase C2 domain-containing subunit beta (1634 aa).

Residues 2 to 298 (SSTQGNGEHW…YASRYGNRKN (297 aa)) are interaction with GRB2. Disordered stretches follow at residues 45 to 188 (EENR…QPSD) and 259 to 315 (GRGP…VGSR). Polar residues predominate over residues 87 to 112 (SDPTLNYNSLSPQEGPPNHSTSQGPQ). Low complexity predominate over residues 176 to 187 (GSPSSSKISQPS). The span at 259–270 (GRGPLDFSKDTS) shows a compositional bias: basic and acidic residues. One can recognise a PI3K-RBD domain in the interval 375 to 463 (EVNLKVTVLC…DIDIRLQLME (89 aa)). One can recognise a C2 PI3K-type domain in the interval 635 to 786 (VYATHRIPII…DSVILQIDFP (152 aa)). In terms of domain architecture, PIK helical spans 805 to 981 (RYEFGSLREE…QYLLAALLCC (177 aa)). The PI3K/PI4K catalytic domain occupies 1050-1328 (VPRDCSYFNS…LIESSLGSVA (279 aa)). Positions 1056 to 1062 (YFNSNAV) are G-loop. The segment at 1192–1200 (GICDRHNDN) is catalytic loop. The segment at 1211–1237 (HIDFGRFLGHAQMFGNIKRDRAPFVFT) is activation loop. One can recognise a PX domain in the interval 1365–1481 (GRISDVFLCR…TFFHPLPRDE (117 aa)). A C2 domain is found at 1504 to 1624 (VGGEVKLSIS…DLAQEKTGWF (121 aa)).

Belongs to the PI3/PI4-kinase family. As to quaternary structure, part of a complex with ERBB2 and EGFR. Part of a complex with phosphorylated EGFR and GRB2. Interacts with phosphorylated EGFR and PDGFR, maybe indirectly. Interacts with GRB2. The cofactor is Ca(2+). Mg(2+) is required as a cofactor. It depends on Mn(2+) as a cofactor. Expressed in columnar and transitional epithelia, mononuclear cells, and ganglion cells (at protein level). Widely expressed, with highest levels in thymus and placenta and lowest in peripheral blood, skeletal muscle and kidney.

The protein localises to the microsome. The protein resides in the cell membrane. It localises to the cytoplasm. Its subcellular location is the cytosol. It is found in the nucleus. The protein localises to the endoplasmic reticulum. The enzyme catalyses a 1,2-diacyl-sn-glycero-3-phospho-(1D-myo-inositol 4-phosphate) + ATP = a 1,2-diacyl-sn-glycero-3-phospho-(1D-myo-inositol-3,4-bisphosphate) + ADP + H(+). It catalyses the reaction a 1,2-diacyl-sn-glycero-3-phospho-(1D-myo-inositol) + ATP = a 1,2-diacyl-sn-glycero-3-phospho-(1D-myo-inositol-3-phosphate) + ADP + H(+). Activated by GRB2. In terms of biological role, phosphorylates PtdIns and PtdIns4P with a preference for PtdIns. Does not phosphorylate PtdIns(4,5)P2. May be involved in EGF and PDGF signaling cascades. This Homo sapiens (Human) protein is Phosphatidylinositol 4-phosphate 3-kinase C2 domain-containing subunit beta (PIK3C2B).